Here is a 442-residue protein sequence, read N- to C-terminus: Lysosomal dipeptide transporter MFSD1 (442 aa).

The Dileucine internalization motif motif lies at L8–L9. 10 helical membrane passes run L38–P58, T85–V105, A107–V127, L187–L207, L238–L258, A276–V296, I303–T323, L333–V353, F364–L384, and L390–L410.

The protein belongs to the major facilitator superfamily. Homodimer. Interacts with lysosomal protein GLMP (via lumenal domain); the interaction starts while both proteins are still in the endoplasmic reticulum and is required for stabilization of MFSD1 in lysosomes but has no direct effect on its targeting to lysosomes or transporter activity.

It is found in the lysosome membrane. The enzyme catalyses L-alpha-aminoacyl-L-arginine(out) = L-alpha-aminoacyl-L-arginine(in). It catalyses the reaction L-arginyl-L-alpha-amino acid(out) = L-arginyl-L-alpha-amino acid(in). It carries out the reaction L-arginyl-glycine(out) = L-arginyl-glycine(in). The catalysed reaction is L-alpha-aminoacyl-L-lysine(out) = L-alpha-aminoacyl-L-lysine(in). The enzyme catalyses L-aspartyl-L-lysine(out) = L-aspartyl-L-lysine(in). It catalyses the reaction L-alanyl-L-lysine(out) = L-alanyl-L-lysine(in). It carries out the reaction L-lysyl-L-alpha-amino acid(out) = L-lysyl-L-alpha-amino acid(in). The catalysed reaction is L-lysyl-L-alanine(out) = L-lysyl-L-alanine(in). The enzyme catalyses L-lysyl-L-lysine(out) = L-lysyl-L-lysine(in). It catalyses the reaction L-lysyl-glycine(out) = L-lysyl-glycine(in). It carries out the reaction L-alpha-aminoacyl-L-histidine(out) = L-alpha-aminoacyl-L-histidine(in). The catalysed reaction is L-histidyl-L-alpha-amino acid(out) = L-histidyl-L-alpha-amino acid(in). The enzyme catalyses L-histidyl-glycine(out) = L-histidyl-glycine(in). In terms of biological role, lysosomal dipeptide uniporter that selectively exports lysine, arginine or histidine-containing dipeptides with a net positive charge from the lysosome lumen into the cytosol. Could play a role in a specific type of protein O-glycosylation indirectly regulating macrophages migration and tissue invasion. Also essential for liver homeostasis. This is Lysosomal dipeptide transporter MFSD1 from Gallus gallus (Chicken).